The chain runs to 410 residues: UDP-N-acetylglucosamine--dolichyl-phosphate N-acetylglucosaminephosphotransferase (410 aa).

Residues 1–10 (MWAFPELPLP) lie on the Lumenal side of the membrane. The chain crosses the membrane as a helical span at residues 11–40 (LPLLVNLIGSLLGFVATVTLIPAFRSHFIA). Residues 41–60 (ARLCGQDLNKLSQQQIPESQ) lie on the Cytoplasmic side of the membrane. Residues 46–48 (QDL) and glutamate 58 each bind UDP-N-acetyl-alpha-D-glucosamine. A helical membrane pass occupies residues 61–80 (GVISGAVFLIILFCFIPFPF). Topologically, residues 81-93 (LNCFVEEQCKAFP) are lumenal. A helical transmembrane segment spans residues 94–120 (HHEFVALIGALLAICCMIFLGFADDVL). Residues 121 to 123 (NLR) lie on the Cytoplasmic side of the membrane. A helical transmembrane segment spans residues 124–145 (WRHKLLLPTAASLPLLMVYFTN). A dolichyl phosphate-binding site is contributed by lysine 127. At 146–168 (FGNTTIVVPKPFRWILGLHLDLG) the chain is on the lumenal side. The N-linked (GlcNAc...) asparagine glycan is linked to asparagine 148. A helical transmembrane segment spans residues 169–188 (ILYYVYMGLLAVFCTNAINI). 180–188 (VFCTNAINI) contributes to the dolichyl phosphate binding site. Asparagine 187 contacts Mg(2+). Residues 189–194 (LAGING) are Cytoplasmic-facing. Asparagine 193 is a binding site for UDP-N-acetyl-alpha-D-glucosamine. The chain crosses the membrane as a helical span at residues 195–215 (LEAGQSLVISASIIVFNLVEL). Residues 216–220 (EGDYR) lie on the Lumenal side of the membrane. A helical transmembrane segment spans residues 221 to 244 (DDHIFSLYFMIPFFFTTLGLLYHN). At 245–252 (WYPSRVFV) the chain is on the cytoplasmic side. A helical membrane pass occupies residues 253–271 (GDTFCYFAGMTFAVVGILG). Aspartate 254 contributes to the Mg(2+) binding site. Topologically, residues 272–273 (HF) are lumenal. A helical transmembrane segment spans residues 274–295 (SKTMLLFFMPQVFNFLYSLPQL). Residues 296–377 (FHIIPCPRHR…LLLKVFGPIH (82 aa)) are Cytoplasmic-facing. 303–305 (RHR) is a UDP-N-acetyl-alpha-D-glucosamine binding site. Residues 378–402 (ERNLTLLLLLLQVLSSAATFSIRYQ) traverse the membrane as a helical segment. The Lumenal segment spans residues 403–410 (LVRLFYDV).

It belongs to the glycosyltransferase 4 family. In terms of assembly, homodimer. Mg(2+) serves as cofactor.

The protein resides in the endoplasmic reticulum membrane. It catalyses the reaction a di-trans,poly-cis-dolichyl phosphate + UDP-N-acetyl-alpha-D-glucosamine = an N-acetyl-alpha-D-glucosaminyl-diphospho-di-trans,poly-cis-dolichol + UMP. The protein operates within protein modification; protein glycosylation. Its activity is regulated as follows. Inhibited by natural nucleoside antibiotic tunicamycin, which acts as a structural analog and competitor of UDP-GlcNAc. In terms of biological role, UDP-N-acetylglucosamine--dolichyl-phosphate N-acetylglucosaminephosphotransferase that operates in the biosynthetic pathway of dolichol-linked oligosaccharides, the glycan precursors employed in protein asparagine (N)-glycosylation. The assembly of dolichol-linked oligosaccharides begins on the cytosolic side of the endoplasmic reticulum membrane and finishes in its lumen. The sequential addition of sugars to dolichol pyrophosphate produces dolichol-linked oligosaccharides containing fourteen sugars, including two GlcNAcs, nine mannoses and three glucoses. Once assembled, the oligosaccharide is transferred from the lipid to nascent proteins by oligosaccharyltransferases. Catalyzes the initial step of dolichol-linked oligosaccharide biosynthesis, transfering GlcNAc-1-P from cytosolic UDP-GlcNAc onto the carrier lipid dolichyl phosphate (P-dolichol), yielding GlcNAc-P-P-dolichol embedded in the cytoplasmic leaflet of the endoplasmic reticulum membrane. The protein is UDP-N-acetylglucosamine--dolichyl-phosphate N-acetylglucosaminephosphotransferase of Mus musculus (Mouse).